The chain runs to 1058 residues: Carbamoyl phosphate synthase large chain (1058 aa).

The carboxyphosphate synthetic domain stretch occupies residues 1 to 401; that stretch reads MPKRTDIQKI…SLLKACRSLE (401 aa). ATP contacts are provided by Arg-129, Arg-169, Gly-175, Gly-176, Arg-208, Ile-210, Glu-215, Gly-241, Ile-242, His-243, Gln-284, and Glu-298. Residues 133 to 327 form the ATP-grasp 1 domain; it reads KQLMEELEQP…IAKLAAKIAV (195 aa). Gln-284, Glu-298, and Asn-300 together coordinate Mg(2+). Gln-284, Glu-298, and Asn-300 together coordinate Mn(2+). Residues 402 to 546 form an oligomerization domain region; sequence IGVHHNEIPE…YSTYGWENES (145 aa). A carbamoyl phosphate synthetic domain region spans residues 547-929; it reads IRSDKESVLV…ALYKAFEASY (383 aa). In terms of domain architecture, ATP-grasp 2 spans 671 to 861; sequence EQALKELDIP…MAQVATKLIL (191 aa). 10 residues coordinate ATP: Arg-707, Ser-746, Ile-748, Glu-752, Gly-777, Val-778, His-779, Ser-780, Gln-820, and Glu-832. The Mg(2+) site is built by Gln-820, Glu-832, and Asn-834. Residues Gln-820, Glu-832, and Asn-834 each coordinate Mn(2+). The region spanning 930-1058 is the MGS-like domain; sequence LHLPTFGNVV…ESRSFVTEAI (129 aa). The allosteric domain stretch occupies residues 930–1058; that stretch reads LHLPTFGNVV…ESRSFVTEAI (129 aa).

It belongs to the CarB family. Composed of two chains; the small (or glutamine) chain promotes the hydrolysis of glutamine to ammonia, which is used by the large (or ammonia) chain to synthesize carbamoyl phosphate. Tetramer of heterodimers (alpha,beta)4. It depends on Mg(2+) as a cofactor. Requires Mn(2+) as cofactor.

It catalyses the reaction hydrogencarbonate + L-glutamine + 2 ATP + H2O = carbamoyl phosphate + L-glutamate + 2 ADP + phosphate + 2 H(+). It carries out the reaction hydrogencarbonate + NH4(+) + 2 ATP = carbamoyl phosphate + 2 ADP + phosphate + 2 H(+). It functions in the pathway amino-acid biosynthesis; L-arginine biosynthesis; carbamoyl phosphate from bicarbonate: step 1/1. The protein operates within pyrimidine metabolism; UMP biosynthesis via de novo pathway; (S)-dihydroorotate from bicarbonate: step 1/3. Large subunit of the glutamine-dependent carbamoyl phosphate synthetase (CPSase). CPSase catalyzes the formation of carbamoyl phosphate from the ammonia moiety of glutamine, carbonate, and phosphate donated by ATP, constituting the first step of 2 biosynthetic pathways, one leading to arginine and/or urea and the other to pyrimidine nucleotides. The large subunit (synthetase) binds the substrates ammonia (free or transferred from glutamine from the small subunit), hydrogencarbonate and ATP and carries out an ATP-coupled ligase reaction, activating hydrogencarbonate by forming carboxy phosphate which reacts with ammonia to form carbamoyl phosphate. The chain is Carbamoyl phosphate synthase large chain from Streptococcus pneumoniae (strain 70585).